Consider the following 24-residue polypeptide: 29 kDa outer membrane protein (24 aa).

It localises to the cell outer membrane. May be involved in transporting molecules across the outer membrane. The chain is 29 kDa outer membrane protein from Acinetobacter baumannii.